Reading from the N-terminus, the 356-residue chain is tRNA N6-adenosine threonylcarbamoyltransferase (356 aa).

Residues His-115 and His-119 each contribute to the Fe cation site. Substrate contacts are provided by residues 139 to 143 (LVSGG), Asp-173, Gly-186, Asp-190, and Asn-291. Asp-319 lines the Fe cation pocket.

It belongs to the KAE1 / TsaD family. Requires Fe(2+) as cofactor.

It localises to the cytoplasm. The enzyme catalyses L-threonylcarbamoyladenylate + adenosine(37) in tRNA = N(6)-L-threonylcarbamoyladenosine(37) in tRNA + AMP + H(+). Required for the formation of a threonylcarbamoyl group on adenosine at position 37 (t(6)A37) in tRNAs that read codons beginning with adenine. Is involved in the transfer of the threonylcarbamoyl moiety of threonylcarbamoyl-AMP (TC-AMP) to the N6 group of A37, together with TsaE and TsaB. TsaD likely plays a direct catalytic role in this reaction. The sequence is that of tRNA N6-adenosine threonylcarbamoyltransferase from Arthrobacter sp. (strain FB24).